The following is a 317-amino-acid chain: MINFKKQIMKKTTFFLCAMLLVSSILIAPRSSLAYPFWAQQNYESPREATGKIVCANCHLAQMPTIAEVPQAVGADSVFKAVVKIPYKDDIKEIGADGSEVPLQVGAVVMLPDGFKLAPQERWTDEIKEETEGVYFTNYSEEKENIIIVGPLPGDTNKEIIFPVLSPNPATNKEYHYGKYSLHIGGNRGRGQVYPTGDKSNNVIFTSSSAGTINSIETIEDGSYQINIENENGEITTEAVPVGPKLIVKEQDQITVGAPLTSDPNVGGFGQLDAEVVLQSPYRIIGLIAFFIGVGLTQILLVLKKKQVEKVQAAEGI.

Positions methionine 1–alanine 34 are cleaved as a signal peptide. Positions 35, 55, 58, and 59 each coordinate heme. The chain crosses the membrane as a helical span at residues isoleucine 284–lysine 304.

It belongs to the cytochrome f family. As to quaternary structure, the 4 large subunits of the cytochrome b6-f complex are cytochrome b6, subunit IV (17 kDa polypeptide, PetD), cytochrome f and the Rieske protein, while the 4 small subunits are PetG, PetL, PetM and PetN. The complex functions as a dimer. Heme serves as cofactor.

The protein localises to the cellular thylakoid membrane. In terms of biological role, component of the cytochrome b6-f complex, which mediates electron transfer between photosystem II (PSII) and photosystem I (PSI), cyclic electron flow around PSI, and state transitions. This chain is Cytochrome f, found in Prochlorococcus marinus (strain MIT 9515).